The following is a 548-amino-acid chain: Viridiflorene synthase (548 aa).

Mg(2+) is bound by residues Asp-301, Asp-305, Asp-444, Thr-448, and Glu-452. The short motif at 301–305 is the DDXXD motif element; the sequence is DDTFD.

The protein belongs to the terpene synthase family. Tpsa subfamily. The cofactor is Mg(2+). In terms of tissue distribution, expressed in stem and leaf trichomes. Detected in roots, fruits and flowers.

It localises to the cytoplasm. The enzyme catalyses (2E,6E)-farnesyl diphosphate = viridiflorene + diphosphate. Its pathway is secondary metabolite biosynthesis; terpenoid biosynthesis. Its function is as follows. Sesquiterpene synthase involved in the production of viridiflorene from (E,E)-farnesyl diphosphate. Can also use (Z,Z)-FPP to make several unidentified sesquiterpenes. The chain is Viridiflorene synthase from Solanum lycopersicum (Tomato).